The primary structure comprises 168 residues: Mediator of RNA polymerase II transcription subunit 7b (168 aa).

A compositionally biased stretch (pro residues) spans 1–12 (MATATYPPPPPY). Residues 1–33 (MATATYPPPPPYYRLYKDFSENTDSAPEPPPPI) form a disordered region. Coiled-coil stretches lie at residues 64–92 (KDSN…ADVL) and 132–162 (IMEL…KDAF).

This sequence belongs to the Mediator complex subunit 7 family. Component of the Mediator complex. Interacts with MEE14/CBP1.

It is found in the nucleus. Its function is as follows. Component of the Mediator complex, a coactivator involved in the regulated transcription of nearly all RNA polymerase II-dependent genes. Mediator functions as a bridge to convey information from gene-specific regulatory proteins to the basal RNA polymerase II transcription machinery. The Mediator complex, having a compact conformation in its free form, is recruited to promoters by direct interactions with regulatory proteins and serves for the assembly of a functional pre-initiation complex with RNA polymerase II and the general transcription factors. This chain is Mediator of RNA polymerase II transcription subunit 7b (MED7B), found in Arabidopsis thaliana (Mouse-ear cress).